Reading from the N-terminus, the 459-residue chain is Plasma alpha-L-fucosidase (459 aa).

A signal peptide spans 1-23 (MRLGLLMFLPLLLLATRYRAVTA). N-linked (GlcNAc...) asparagine glycans are attached at residues N163 and N231. S293 carries the phosphoserine modification. An N-linked (GlcNAc...) asparagine glycan is attached at N369.

This sequence belongs to the glycosyl hydrolase 29 family. As to quaternary structure, homotetramer.

It is found in the secreted. It carries out the reaction an alpha-L-fucoside + H2O = L-fucose + an alcohol. Alpha-L-fucosidase is responsible for hydrolyzing the alpha-1,6-linked fucose joined to the reducing-end N-acetylglucosamine of the carbohydrate moieties of glycoproteins. The chain is Plasma alpha-L-fucosidase (Fuca2) from Rattus norvegicus (Rat).